Here is a 155-residue protein sequence, read N- to C-terminus: Ribosomal RNA large subunit methyltransferase H (155 aa).

Residues leucine 72, glycine 103, and 122–127 each bind S-adenosyl-L-methionine; that span reads LSPLTL.

Belongs to the RNA methyltransferase RlmH family. Homodimer.

The protein localises to the cytoplasm. The catalysed reaction is pseudouridine(1915) in 23S rRNA + S-adenosyl-L-methionine = N(3)-methylpseudouridine(1915) in 23S rRNA + S-adenosyl-L-homocysteine + H(+). Functionally, specifically methylates the pseudouridine at position 1915 (m3Psi1915) in 23S rRNA. The protein is Ribosomal RNA large subunit methyltransferase H of Aeromonas salmonicida (strain A449).